The primary structure comprises 190 residues: Hypoxanthine/guanine phosphoribosyltransferase (190 aa).

The protein belongs to the purine/pyrimidine phosphoribosyltransferase family. Archaeal HPRT subfamily. In terms of assembly, homodimer.

The protein localises to the cytoplasm. It carries out the reaction IMP + diphosphate = hypoxanthine + 5-phospho-alpha-D-ribose 1-diphosphate. It catalyses the reaction GMP + diphosphate = guanine + 5-phospho-alpha-D-ribose 1-diphosphate. The protein operates within purine metabolism; IMP biosynthesis via salvage pathway; IMP from hypoxanthine: step 1/1. Catalyzes a salvage reaction resulting in the formation of IMP that is energically less costly than de novo synthesis. The protein is Hypoxanthine/guanine phosphoribosyltransferase of Methanothrix thermoacetophila (strain DSM 6194 / JCM 14653 / NBRC 101360 / PT) (Methanosaeta thermophila).